The following is a 577-amino-acid chain: MRTSQLFYKTSKNANKDAAVLSYELLEKAGYIFKTAKGVYTYTPLFWRVALKMMDIVREELNAIGGQELMLPILHPAELWQKTGRWEAFRSEGLLYTLTDREDKELCLAPTHEEVVTMFVSQWLSGRKQLPIHLYQIATKFRDEIRPRFGLMRAREFLMEDSYTFSDSPEQMNEQYDKLRRAYQKIFDRLEIKYVIVEADGGKIGKGKSEEFHVLCSLGEDTICVSGDYGANIEAAVALPVQYTYDKEFLPIEEVATPDVRTIENLQDFFSIPPYRIMKTLVVKLSYGEKNTFVAIGIRGDRQINLTKIRSKLNADECALASDEEIQNNLGTEKGFVGPLNCPIEFYADETTRCMTNFICAGNAKDKHYKNVNWDRDIPRPEYADFLLAEAGDLCPSNGNAPYEIFEGVEVAHIFNLGTRYTECFDVGFQNEQGEQQTCWMGTYGIGIGRTLAACVEQLADDRGIVWPKAIAPFDISILYNGGDSASQEAAEKIYTELQNSGYAPLLDDRNERLGFKLKDSDLIGIPYKLILGKTFLNSGTLEIESRSGEKFSVQPKDFVHWCENYLPQSQKLSSAS.

This sequence belongs to the class-II aminoacyl-tRNA synthetase family. ProS type 1 subfamily. As to quaternary structure, homodimer.

Its subcellular location is the cytoplasm. The catalysed reaction is tRNA(Pro) + L-proline + ATP = L-prolyl-tRNA(Pro) + AMP + diphosphate. Its function is as follows. Catalyzes the attachment of proline to tRNA(Pro) in a two-step reaction: proline is first activated by ATP to form Pro-AMP and then transferred to the acceptor end of tRNA(Pro). As ProRS can inadvertently accommodate and process non-cognate amino acids such as alanine and cysteine, to avoid such errors it has two additional distinct editing activities against alanine. One activity is designated as 'pretransfer' editing and involves the tRNA(Pro)-independent hydrolysis of activated Ala-AMP. The other activity is designated 'posttransfer' editing and involves deacylation of mischarged Ala-tRNA(Pro). The misacylated Cys-tRNA(Pro) is not edited by ProRS. The protein is Proline--tRNA ligase of Chlamydia felis (strain Fe/C-56) (Chlamydophila felis).